A 448-amino-acid polypeptide reads, in one-letter code: Exodeoxyribonuclease 7 large subunit (448 aa).

Belongs to the XseA family. Heterooligomer composed of large and small subunits.

The protein localises to the cytoplasm. The enzyme catalyses Exonucleolytic cleavage in either 5'- to 3'- or 3'- to 5'-direction to yield nucleoside 5'-phosphates.. Bidirectionally degrades single-stranded DNA into large acid-insoluble oligonucleotides, which are then degraded further into small acid-soluble oligonucleotides. This is Exodeoxyribonuclease 7 large subunit from Enterococcus faecalis (strain ATCC 700802 / V583).